The primary structure comprises 319 residues: Guanidinobutyrase (319 aa).

Mn(2+) contacts are provided by histidine 129, aspartate 152, histidine 154, aspartate 156, aspartate 243, and aspartate 245.

Belongs to the arginase family. Agmatinase subfamily. In terms of assembly, homohexamer. It depends on Mn(2+) as a cofactor.

It carries out the reaction 4-guanidinobutanoate + H2O = urea + 4-aminobutanoate. Its function is as follows. Catalyzes specifically the hydrolysis of 4-guanidinobutanoate to 4-aminobutanoate and urea. Has no activity against arginine, agmatine, 3-guanidinopropionate and guanidinoacetate. This chain is Guanidinobutyrase (gbuA), found in Pseudomonas aeruginosa (strain ATCC 15692 / DSM 22644 / CIP 104116 / JCM 14847 / LMG 12228 / 1C / PRS 101 / PAO1).